The following is a 330-amino-acid chain: Probable deoxyhypusine synthase (330 aa).

The interval 1–25 is disordered; it reads MTGDDADETHENVVPGSDEDLDTPD. K298 (nucleophile) is an active-site residue.

It belongs to the deoxyhypusine synthase family. It depends on NAD(+) as a cofactor.

It carries out the reaction [eIF5A protein]-L-lysine + spermidine = [eIF5A protein]-deoxyhypusine + propane-1,3-diamine. Its pathway is protein modification; eIF5A hypusination. Catalyzes the NAD-dependent oxidative cleavage of spermidine and the subsequent transfer of the butylamine moiety of spermidine to the epsilon-amino group of a specific lysine residue of the eIF-5A precursor protein to form the intermediate deoxyhypusine residue. This Halobacterium salinarum (strain ATCC 29341 / DSM 671 / R1) protein is Probable deoxyhypusine synthase.